The sequence spans 619 residues: Sodium-coupled monocarboxylate transporter 2 (619 aa).

At 1-9 (MRVKNFEAW) the chain is on the extracellular side. The helical transmembrane segment at 10 to 30 (DYVVFAGLFVISSGIGVFFAI) threads the bilayer. The Cytoplasmic portion of the chain corresponds to 31 to 47 (KERKKTTSREFLVGGRQ). A helical membrane pass occupies residues 48 to 68 (MSFGPVALSLTASFMSAVTVL). Residues 69-80 (GTPAEVYRFGAS) lie on the Extracellular side of the membrane. Residues 81 to 101 (FFLFLISYVFVVFFTSELFLP) form a helical membrane-spanning segment. Topologically, residues 102–128 (VFYRSGITSTYEYLQLRFNKPVRYAAT) are cytoplasmic. The helical transmembrane segment at 129-149 (IIYIVQTILYTGVVVYAPALA) threads the bilayer. At 150–157 (LNQVTGFN) the chain is on the extracellular side. A helical transmembrane segment spans residues 158 to 178 (LWASVFATGIVCTFYCSLGGL). Over 179–180 (KA) the chain is Cytoplasmic. The helical transmembrane segment at 181–201 (VVWTDAFQMVVMIVGFLTVLI) threads the bilayer. Topologically, residues 202 to 235 (QGSNHVGGFNNVLEKAGNGSRLHIVDFDVDPLRR) are extracellular. An N-linked (GlcNAc...) asparagine glycan is attached at N219. A helical transmembrane segment spans residues 236–256 (HTFWTITIGGTFTWLGVYGVN). Topologically, residues 257 to 275 (QSTIQRCISCKTEKHAKLA) are cytoplasmic. The helical transmembrane segment at 276–296 (LYFNLLGLWIIVACAVFSGLI) threads the bilayer. The Extracellular portion of the chain corresponds to 297–321 (MYSHFKDCDPWTSGVISAPDQLMPY). A helical membrane pass occupies residues 322–342 (FVMEIFATMPGLPGLFVACAF). Residues 343–385 (SGTLSTVAASINALATVTFEDFVKSCFPHLSDKLSTWISKGLC) are Cytoplasmic-facing. A helical transmembrane segment spans residues 386 to 406 (ILFGIMCTSMAVVASLMGSVV). Residues 407-411 (QAALS) lie on the Extracellular side of the membrane. The helical transmembrane segment at 412-432 (IHGMCGGPMLGLFTLGLVFPF) threads the bilayer. At 433-437 (VNWKG) the chain is on the cytoplasmic side. Residues 438–458 (ALGGLLTGITLSFWVAIGSFI) traverse the membrane as a helical segment. Topologically, residues 459–504 (YPAPESKTLPLPLSTEHCVELNITTTVAPQISSRPVLADTWYSLSY) are extracellular. N-linked (GlcNAc...) asparagine glycosylation is present at N480. Residues 505 to 525 (LYFSAVGCLGCIAAGIIISFL) form a helical membrane-spanning segment. At 526 to 619 (TGKQRGKDID…NSVPEKTTYF (94 aa)) the chain is on the cytoplasmic side.

The protein belongs to the sodium:solute symporter (SSF) (TC 2.A.21) family. In terms of tissue distribution, expressed in the cortical region of the kidney corresponding to the proximal tubule. Expressed in Mueller cells of the inner retina (at protein level). Isoform 1 is expressed in the retina, kidney, small intestine and skeletal muscle. Isoform 2 is not detected in the kidney, small intestine and skeletal muscle. In the kidney, expressed predominantly in tubular epithelial cells of the cortical region and in the convoluted portions of the proximal tubule (pars convoluta). In the small intestine, its expression is highest in the proximal part and gradually decreased towards the distal end. Expressed in the neural retina. Not detected in the caecum and colon.

It localises to the apical cell membrane. The enzyme catalyses (S)-lactate(out) + Na(+)(out) = (S)-lactate(in) + Na(+)(in). The catalysed reaction is nicotinate(out) + Na(+)(out) = nicotinate(in) + Na(+)(in). It carries out the reaction pyruvate(out) + Na(+)(out) = pyruvate(in) + Na(+)(in). It catalyses the reaction propanoate(out) + Na(+)(out) = propanoate(in) + Na(+)(in). The enzyme catalyses butanoate(out) + Na(+)(out) = butanoate(in) + Na(+)(in). The catalysed reaction is acetoacetate(out) + Na(+)(out) = acetoacetate(in) + Na(+)(in). Its function is as follows. Acts as an electroneutral and low-affinity sodium (Na(+))-dependent sodium-coupled solute transporter. Catalyzes the transport across the plasma membrane of many monocarboxylates such as lactate, pyruvate, nicotinate, propionate, butyrate and beta-D-hydroxybutyrate. May be responsible for the first step of reabsorption of monocarboxylates from the lumen of the proximal tubule of the kidney and the small intestine. May play also a role in monocarboxylates transport in the retina. Mediates electroneutral uptake of lactate, with a stoichiometry of 2 Na(+) for each lactate. The polypeptide is Sodium-coupled monocarboxylate transporter 2 (Slc5a12) (Mus musculus (Mouse)).